A 304-amino-acid polypeptide reads, in one-letter code: Probable solute-binding protein AdeT1 (304 aa).

The protein belongs to the bacterial solute-binding protein 7 family.

Functionally, mediates antimicrobial resistance via active efflux. Contributes to resistance to antibiotics such as chloramphenicol, erythromycin and novobiocin. May be part of a tripartite ATP-independent periplasmic (TRAP) transport system. This is Probable solute-binding protein AdeT1 from Acinetobacter baumannii.